We begin with the raw amino-acid sequence, 50 residues long: Insulin-1 (50 aa).

3 cysteine pairs are disulfide-bonded: cysteine 7–cysteine 36, cysteine 19–cysteine 49, and cysteine 35–cysteine 40.

This sequence belongs to the insulin family. Heterodimer of a B chain and an A chain linked by two disulfide bonds.

The protein resides in the secreted. Insulin decreases blood glucose concentration. It increases cell permeability to monosaccharides, amino acids and fatty acids. It accelerates glycolysis, the pentose phosphate cycle, and glycogen synthesis in liver. In Thunnus orientalis (North Pacific bluefin tuna), this protein is Insulin-1.